The following is a 483-amino-acid chain: Serine/threonine-protein kinase BSK4 (483 aa).

Gly2 is lipidated: N-myristoyl glycine. Residues 56–322 enclose the Protein kinase domain; sequence ENVVSEHGET…DTEVLSHVLM (267 aa). Residues 62–70 and Lys84 each bind ATP; that span reads HGETAPNVV. Asp178 serves as the catalytic Proton acceptor.

This sequence belongs to the protein kinase superfamily. Ser/Thr protein kinase family.

Its subcellular location is the cell membrane. It catalyses the reaction L-seryl-[protein] + ATP = O-phospho-L-seryl-[protein] + ADP + H(+). The enzyme catalyses L-threonyl-[protein] + ATP = O-phospho-L-threonyl-[protein] + ADP + H(+). Functionally, probable serine/threonine kinase that acts as a positive regulator of brassinosteroid (BR) signaling downstream of the receptor kinase BRI1. Functions redundantly with BSK3, BSK6, BSK7 and BSK8. The chain is Serine/threonine-protein kinase BSK4 from Arabidopsis thaliana (Mouse-ear cress).